We begin with the raw amino-acid sequence, 639 residues long: Probable endo-1,3(4)-beta-glucanase ACLA_073210 (639 aa).

The first 21 residues, 1 to 21, serve as a signal peptide directing secretion; it reads MAPSSLLLSVGSLIASSLASA. A GH16 domain is found at 26 to 290; the sequence is IREQSQSYQL…WAGNVFGESG (265 aa). N-linked (GlcNAc...) asparagine glycosylation occurs at Asn-65. Glu-146 acts as the Nucleophile in catalysis. Residue Glu-151 is the Proton donor of the active site. Disordered stretches follow at residues 337–384 and 442–545; these read TVAS…TVAE and QSSS…GSSI. A compositionally biased stretch (polar residues) spans 339 to 348; the sequence is ASPNTASEVH. Composition is skewed to low complexity over residues 362 to 376 and 478 to 488; these read PTVP…VPPA and TTTEAVAETET. Ala-617 carries GPI-anchor amidated alanine lipidation. Positions 618–639 are cleaved as a propeptide — removed in mature form; it reads GARKLSVGLSGLVGALAVAALA.

It belongs to the glycosyl hydrolase 16 family.

The protein localises to the cell membrane. It catalyses the reaction Endohydrolysis of (1-&gt;3)- or (1-&gt;4)-linkages in beta-D-glucans when the glucose residue whose reducing group is involved in the linkage to be hydrolyzed is itself substituted at C-3.. Mixed-linked glucanase involved in the degradation of complex natural cellulosic substrates. The polypeptide is Probable endo-1,3(4)-beta-glucanase ACLA_073210 (Aspergillus clavatus (strain ATCC 1007 / CBS 513.65 / DSM 816 / NCTC 3887 / NRRL 1 / QM 1276 / 107)).